Consider the following 317-residue polypeptide: Carbonic anhydrase 5B, mitochondrial (317 aa).

A mitochondrion-targeting transit peptide spans 1 to 33 (MVVMNSLRVILQASPGKLLWRKFQIPRFMPARP). In terms of domain architecture, Alpha-carbonic anhydrase spans 37-296 (YTCTYKTRNR…LMNRTVRSSF (260 aa)). The Zn(2+) site is built by His130, His132, and His155. Substrate is bound at residue 235-236 (TT).

This sequence belongs to the alpha-carbonic anhydrase family. Zn(2+) is required as a cofactor. In terms of tissue distribution, strongest expression in heart, pancreas, kidney, placenta, lung, and skeletal muscle. Not expressed in liver.

The protein localises to the mitochondrion. It catalyses the reaction hydrogencarbonate + H(+) = CO2 + H2O. Its activity is regulated as follows. Inhibited by coumarins, sulfonamide derivatives such as acetazolamide (AZA), saccharin and Foscarnet (phosphonoformate trisodium salt). Its function is as follows. Mitochondrial carbonic anhydrase that catalyzes the reversible conversion of carbon dioxide to bicarbonate/HCO3. The protein is Carbonic anhydrase 5B, mitochondrial (CA5B) of Homo sapiens (Human).